Here is a 193-residue protein sequence, read N- to C-terminus: dTTP/UTP pyrophosphatase (193 aa).

Aspartate 75 functions as the Proton acceptor in the catalytic mechanism.

It belongs to the Maf family. YhdE subfamily. It depends on a divalent metal cation as a cofactor.

The protein localises to the cytoplasm. It carries out the reaction dTTP + H2O = dTMP + diphosphate + H(+). The catalysed reaction is UTP + H2O = UMP + diphosphate + H(+). Nucleoside triphosphate pyrophosphatase that hydrolyzes dTTP and UTP. May have a dual role in cell division arrest and in preventing the incorporation of modified nucleotides into cellular nucleic acids. The chain is dTTP/UTP pyrophosphatase from Koribacter versatilis (strain Ellin345).